A 96-amino-acid chain; its full sequence is Large ribosomal subunit protein uL23 (96 aa).

It belongs to the universal ribosomal protein uL23 family. As to quaternary structure, part of the 50S ribosomal subunit. Contacts protein L29, and trigger factor when it is bound to the ribosome.

In terms of biological role, one of the early assembly proteins it binds 23S rRNA. One of the proteins that surrounds the polypeptide exit tunnel on the outside of the ribosome. Forms the main docking site for trigger factor binding to the ribosome. This Brevibacillus brevis (strain 47 / JCM 6285 / NBRC 100599) protein is Large ribosomal subunit protein uL23.